Here is a 961-residue protein sequence, read N- to C-terminus: Probable exosome complex exonuclease RRP44 (961 aa).

In terms of domain architecture, PINc spans 73–188; the sequence is HALIVDSTSL…LVFDEDSKKR (116 aa). A CSD1 domain is found at 232–338; the sequence is IFDEYLSHDR…DEENDDENDE (107 aa). The segment at 322-346 is disordered; that stretch reads ADDMGNEDEENDDENDEPKAKKSKK. Acidic residues predominate over residues 325–337; it reads MGNEDEENDDEND. A CSD2 domain is found at 381 to 447; it reads LFCPAERLIP…ENEVLLLEHD (67 aa). The RNB domain occupies 479-809; that stretch reads RVDLRDLTIC…IVHRLLAAAI (331 aa).

It belongs to the RNR ribonuclease family. As to quaternary structure, component of the RNA exosome complex. As to expression, ubiquitously expressed.

It is found in the nucleus. It localises to the nucleoplasm. In terms of biological role, putative catalytic component of the RNA exosome complex which has 3'-&gt;5' exoribonuclease activity and participates in a multitude of cellular RNA processing and degradation events. Has both 3'-5' exonuclease and endonuclease activities. Involved in regulation of antisense ribosomal siRNA production. This is Probable exosome complex exonuclease RRP44 (dis-3) from Caenorhabditis elegans.